The sequence spans 544 residues: Methyl-accepting chemotaxis protein McpP (544 aa).

3 helical membrane passes run 12 to 32 (RLWL…LLML), 50 to 70 (VVQT…AGTL), and 192 to 212 (DASL…MLIA). In terms of domain architecture, HAMP spans 213-267 (RSIARPLQEAVQAMGNIASGESDLTRRLDTHGSDEITHLGEHFNRFNGKLQGVVG). The Methyl-accepting transducer domain occupies 272–508 (AAHALAQSAG…EINRNVLDTA (237 aa)).

It belongs to the methyl-accepting chemotaxis (MCP) protein family.

The protein resides in the cell membrane. Chemotactic-signal transducers respond to changes in the concentration of attractants and repellents in the environment, transduce a signal from the outside to the inside of the cell, and facilitate sensory adaptation through the variation of the level of methylation. McpP is a chemoreceptor that responds specifically to some C2 and C3 carboxylic acids. Recognizes acetate, pyruvate, propionate, and L-lactate. This Pseudomonas putida (strain ATCC 47054 / DSM 6125 / CFBP 8728 / NCIMB 11950 / KT2440) protein is Methyl-accepting chemotaxis protein McpP.